The following is a 338-amino-acid chain: Protein FosB (338 aa).

Disordered regions lie at residues 1–54 and 80–179; these read MFQA…PGSF and AQSQ…RREL. Over residues 13-31 the composition is skewed to polar residues; it reads SRCSSSPSAESQYLSSVDS. S27 bears the Phosphoserine mark. Residues 123–137 show a composition bias toward low complexity; sequence PSTSTSTSGPVSARP. Residues 155 to 218 form the bZIP domain; that stretch reads EEKRRVRRER…ERLEFVLVAH (64 aa). A basic motif region spans residues 157-182; the sequence is KRRVRRERNKLAAAKCRNRRRELTDR. The interval 183-211 is leucine-zipper; that stretch reads LQAETDQLEEEKAELESEIAELQKEKERL. Disordered stretches follow at residues 222–276 and 315–338; these read CKIP…PPNL and AGSQRTSGSEQPSDPLNSPSLLAL. Pro residues predominate over residues 256 to 265; that stretch reads LPPPPPPPLP. Positions 266–276 are enriched in polar residues; that stretch reads FQSSRDAPPNL.

The protein belongs to the bZIP family. Fos subfamily. In terms of assembly, heterodimer; binds to DNA as heterodimer. Component of an AP-1 transcription factor complex; composed of FOS-JUN heterodimers. As part of the AP-1 transcription factor complex, forms heterodimers with JUN, JUNB or JUND, thereby binding to the AP-1 consensus sequence and stimulating transcription. Phosphorylated; phosphorylation is induced by chronic electroconvulsive seizure (ECS) treatment. In terms of tissue distribution, expressed in brain. Expressed in pyramidal cells in CA1 and CA3, in the dentate gyrus and the nucleus accumbens (at protein level).

It localises to the nucleus. Heterodimerizes with proteins of the JUN family to form an AP-1 transcription factor complex, thereby enhancing their DNA binding activity to an AP-1 consensus sequence 5'-TGA[GC]TCA-3' and enhancing their transcriptional activity. Exhibits transactivation activity in vitro. As part of the AP-1 complex, facilitates enhancer selection together with cell-type-specific transcription factors by collaboratively binding to nucleosomal enhancers and recruiting the SWI/SNF (BAF) chromatin remodeling complex to establish accessible chromatin. Together with JUN, plays a role in activation-induced cell death of T cells by binding to the AP-1 promoter site of FASLG/CD95L, and inducing its transcription in response to activation of the TCR/CD3 signaling pathway. Involved in the display of nurturing behavior towards newborns. May play a role in neurogenesis in the hippocampus and in learning and memory-related tasks by regulating the expression of various genes involved in neurogenesis, depression and epilepsy. Implicated in behavioral responses related to morphine reward and spatial memory. The chain is Protein FosB from Rattus norvegicus (Rat).